An 84-amino-acid chain; its full sequence is Dolichol phosphate-mannose biosynthesis regulatory protein (84 aa).

The next 2 membrane-spanning stretches (helical) occupy residues 11 to 31 (FGLV…VILL) and 49 to 69 (YAVL…GLFI).

The protein belongs to the DPM2 family. Component of the dolichol-phosphate mannose (DPM) synthase complex composed of DPM1, DPM2 and DPM3; in the complex interacts directly with DPM3. Component of the glycosylphosphatidylinositol-N-acetylglucosaminyltransferase (GPI-GnT) complex composed at least by PIGA, PIGC, PIGH, PIGP, PIGQ, PIGY and DPM2. Interacts with PIGA, PIGC and PIGQ.

Its subcellular location is the endoplasmic reticulum membrane. It functions in the pathway protein modification; protein glycosylation. Functionally, regulates the biosynthesis of dolichol phosphate-mannose. Regulatory subunit of the dolichol-phosphate mannose (DPM) synthase complex; essential for the ER localization and stable expression of DPM1. Part of the glycosylphosphatidylinositol-N-acetylglucosaminyltransferase (GPI-GnT) complex that catalyzes the transfer of N-acetylglucosamine from UDP-N-acetylglucosamine to phosphatidylinositol and participates in the first step of GPI biosynthesis. May act by regulating the GPI-GNT complex. In Rattus norvegicus (Rat), this protein is Dolichol phosphate-mannose biosynthesis regulatory protein.